The primary structure comprises 362 residues: Type-1 angiotensin II receptor A (362 aa).

The Extracellular segment spans residues 1–26 (MSNASTVETSDVERIAVNCSKSGMHN). 2 N-linked (GlcNAc...) asparagine glycosylation sites follow: Asn-3 and Asn-18. Cystine bridges form between Cys-19–Cys-273 and Cys-102–Cys-181. A helical transmembrane segment spans residues 27-56 (YIFIAIPIIYSTIFVVGVFGNSMVVIVIYS). The Cytoplasmic portion of the chain corresponds to 57 to 62 (YMKMKT). The helical transmembrane segment at 63 to 90 (VASIFLMNLALSDLCFVITLPLWAAYTA) threads the bilayer. At 91–99 (MHYHWPFGN) the chain is on the extracellular side. The helical transmembrane segment at 100–126 (FLCKVASTAITLNLYTTVFLLTCLSID) threads the bilayer. The Cytoplasmic segment spans residues 127-142 (RYSAIVHPMKSRIWRT). The helical transmembrane segment at 143 to 166 (AMVARLTCVGIWLVAFLASMPSII) threads the bilayer. The Extracellular segment spans residues 167 to 191 (YRQIYLFHDTNQTVCAIVYDSGHIY). Residue Arg-168 coordinates angiotensin II. A glycan (N-linked (GlcNAc...) asparagine) is linked at Asn-177. 2 residues coordinate angiotensin II: Tyr-185 and Lys-200. A helical transmembrane segment spans residues 192 to 217 (FMVGMSLAKNIVGFLIPFLIILTSYT). The Cytoplasmic segment spans residues 218-238 (LIGKTLKEVYRAQRARNDDIF). Residues 239-267 (KMIVAVVLLFFFCWIPYQVFTFLDVLIQM) traverse the membrane as a helical segment. Topologically, residues 268–277 (DVIQNCKMYD) are extracellular. A helical transmembrane segment spans residues 278 to 303 (IVDTGMPITICIAYFNSCLNPFLYGF). The Cytoplasmic segment spans residues 304–362 (FGKNFRKHFLQLIKYIPPKMRTHASVNTKSSLVSSSLSDTKRASKKIALQMTDNEEHCK). A lipid anchor (S-palmitoyl cysteine) is attached at Cys-361.

The protein belongs to the G-protein coupled receptor 1 family. In terms of processing, C-terminal Ser or Thr residues may be phosphorylated. In terms of tissue distribution, expressed in lung, liver, kidney, and spleen, with highest expression in the heart.

The protein resides in the cell membrane. Functionally, receptor for angiotensin II, a vasoconstricting peptide, which acts as a key regulator of blood pressure and sodium retention by the kidney. The activated receptor in turn couples to G-alpha proteins G(q) (GNAQ, GNA11, GNA14 or GNA15) and thus activates phospholipase C and increases the cytosolic Ca(2+) concentrations, which in turn triggers cellular responses such as stimulation of protein kinase C. This Xenopus laevis (African clawed frog) protein is Type-1 angiotensin II receptor A (agtr1-a).